Reading from the N-terminus, the 208-residue chain is Uracil phosphoribosyltransferase (208 aa).

Residues Arg-78, Arg-103, and 130–138 (DPMLATGGS) each bind 5-phospho-alpha-D-ribose 1-diphosphate. Uracil contacts are provided by residues Ile-193 and 198-200 (GDA). 5-phospho-alpha-D-ribose 1-diphosphate is bound at residue Asp-199.

Belongs to the UPRTase family. Requires Mg(2+) as cofactor.

The enzyme catalyses UMP + diphosphate = 5-phospho-alpha-D-ribose 1-diphosphate + uracil. It functions in the pathway pyrimidine metabolism; UMP biosynthesis via salvage pathway; UMP from uracil: step 1/1. With respect to regulation, allosterically activated by GTP. Its function is as follows. Catalyzes the conversion of uracil and 5-phospho-alpha-D-ribose 1-diphosphate (PRPP) to UMP and diphosphate. The polypeptide is Uracil phosphoribosyltransferase (Sodalis glossinidius (strain morsitans)).